Here is a 281-residue protein sequence, read N- to C-terminus: 2-dehydro-3-deoxyphosphooctonate aldolase (281 aa).

This sequence belongs to the KdsA family.

The protein localises to the cytoplasm. It carries out the reaction D-arabinose 5-phosphate + phosphoenolpyruvate + H2O = 3-deoxy-alpha-D-manno-2-octulosonate-8-phosphate + phosphate. Its pathway is carbohydrate biosynthesis; 3-deoxy-D-manno-octulosonate biosynthesis; 3-deoxy-D-manno-octulosonate from D-ribulose 5-phosphate: step 2/3. It functions in the pathway bacterial outer membrane biogenesis; lipopolysaccharide biosynthesis. The protein is 2-dehydro-3-deoxyphosphooctonate aldolase of Pseudomonas fluorescens (strain SBW25).